Here is a 183-residue protein sequence, read N- to C-terminus: Probable adenylyl-sulfate kinase (183 aa).

Residue 17 to 24 (GLPGSGKT) coordinates ATP. Residue serine 91 is the Phosphoserine intermediate of the active site.

The protein belongs to the APS kinase family.

It carries out the reaction adenosine 5'-phosphosulfate + ATP = 3'-phosphoadenylyl sulfate + ADP + H(+). Its pathway is sulfur metabolism; hydrogen sulfide biosynthesis; sulfite from sulfate: step 2/3. In terms of biological role, catalyzes the synthesis of activated sulfate. The chain is Probable adenylyl-sulfate kinase (cysC) from Aeropyrum pernix (strain ATCC 700893 / DSM 11879 / JCM 9820 / NBRC 100138 / K1).